The following is a 241-amino-acid chain: B-cell receptor-associated protein 29 (241 aa).

The Lumenal portion of the chain corresponds to 1–6; the sequence is MTLQWA. A helical transmembrane segment spans residues 7–27; sequence AVATFLYAEIGLILIFCLPFI. Over 28–43 the chain is Cytoplasmic; sequence PPQRWQKIFSFNVWGK. A helical transmembrane segment spans residues 44–64; that stretch reads IATFWNKAFLTIIILLIVLFL. Residues 65–103 are Lumenal-facing; the sequence is DAVREVRKYSSVHTIEKSSTSRPDAYEHTQMKLFRSQRN. The helical transmembrane segment at 104-124 threads the bilayer; sequence LYISGFSLFFWLVLRRLVTLI. Topologically, residues 125 to 241 are cytoplasmic; the sequence is TQLAKELSNK…RLERGNKKRL (117 aa). Positions 166–233 form a coiled coil; the sequence is GKDEECVLEA…KEHSELQDRL (68 aa). The tract at residues 193-223 is disordered; it reads KTSDALSKAQNDVMEMKMQSERLSKEYDQLL. Residues 206–223 are compositionally biased toward basic and acidic residues; it reads MEMKMQSERLSKEYDQLL. The Di-lysine motif signature appears at 238–241; the sequence is KKRL.

It belongs to the BCAP29/BCAP31 family. Homodimer and heterodimer with BCAP31. Binds CASP8 as a complex containing BCAP31, BCAP29, BCL2 and/or BCL2L1. Interacts with VAMP3, VAMP1 and membrane IgD immunoglobulins. May interact with ACTG1 and non-muscle myosin II.

It is found in the endoplasmic reticulum membrane. In terms of biological role, may play a role in anterograde transport of membrane proteins from the endoplasmic reticulum to the Golgi. May be involved in CASP8-mediated apoptosis. The chain is B-cell receptor-associated protein 29 (BCAP29) from Pongo abelii (Sumatran orangutan).